The primary structure comprises 1313 residues: Inactive protein tyrosine kinase pTKL (1313 aa).

2 MORN repeats span residues 20–42 (YAGD…ENGN) and 45–63 (FGHF…IDKN). Residues Asn-63, Asn-131, Asn-178, Asn-208, Asn-254, Asn-260, and Asn-288 are each glycosylated (N-linked (GlcNAc...) asparagine). An SAM domain is found at 300-365 (WNKEQVAQWL…LQLIKNLRVT (66 aa)). N-linked (GlcNAc...) asparagine glycans are attached at residues Asn-466, Asn-516, Asn-525, Asn-528, and Asn-534. A compositionally biased stretch (basic and acidic residues) spans 569–580 (EPIKPNKEKEEN). The interval 569–631 (EPIKPNKEKE…SEKSSETSSE (63 aa)) is disordered. Polar residues predominate over residues 586–604 (PIINSKNETNLLNDSNPTK). N-linked (GlcNAc...) asparagine glycosylation is found at Asn-592, Asn-598, Asn-661, Asn-678, Asn-729, Asn-735, and Asn-749. Lys-782 serves as a coordination point for ATP. Asn-790, Asn-868, Asn-940, Asn-983, and Asn-1000 each carry an N-linked (GlcNAc...) asparagine glycan. The Protein kinase domain occupies 962–1294 (FRNKNNILCG…FDRILIEISM (333 aa)). The RVxF motif signature appears at 1052 to 1055 (KILF). Residues Asn-1191 and Asn-1198 are each glycosylated (N-linked (GlcNAc...) asparagine).

This sequence belongs to the protein kinase superfamily. TKL Ser/Thr protein kinase family.

It localises to the parasitophorous vacuole. Its subcellular location is the host cell membrane. It is found in the host cytoplasm. The protein resides in the host cytoskeleton. This chain is Inactive protein tyrosine kinase pTKL, found in Plasmodium berghei (strain Anka).